The sequence spans 203 residues: Proteasome subunit beta 1 (203 aa).

Positions 1–7 (MTEKLKG) are cleaved as a propeptide — removed in mature form; by autocatalysis. Thr-8 (nucleophile) is an active-site residue.

This sequence belongs to the peptidase T1B family. The 20S proteasome core is composed of 14 alpha and 14 beta subunits that assemble into four stacked heptameric rings, resulting in a barrel-shaped structure. The two inner rings, each composed of seven catalytic beta subunits, are sandwiched by two outer rings, each composed of seven alpha subunits. The catalytic chamber with the active sites is on the inside of the barrel. Has a gated structure, the ends of the cylinder being occluded by the N-termini of the alpha-subunits. Is capped at one or both ends by the proteasome regulatory ATPase, PAN.

Its subcellular location is the cytoplasm. It catalyses the reaction Cleavage of peptide bonds with very broad specificity.. With respect to regulation, the formation of the proteasomal ATPase PAN-20S proteasome complex, via the docking of the C-termini of PAN into the intersubunit pockets in the alpha-rings, triggers opening of the gate for substrate entry. Interconversion between the open-gate and close-gate conformations leads to a dynamic regulation of the 20S proteasome proteolysis activity. Component of the proteasome core, a large protease complex with broad specificity involved in protein degradation. The sequence is that of Proteasome subunit beta 1 from Thermococcus kodakarensis (strain ATCC BAA-918 / JCM 12380 / KOD1) (Pyrococcus kodakaraensis (strain KOD1)).